A 292-amino-acid chain; its full sequence is ATP synthase subunit a (292 aa).

The next 6 membrane-spanning stretches (helical) occupy residues 37 to 57 (IDSV…FWLC), 96 to 116 (FIAP…AMDM), 144 to 164 (VVPT…LVLC), 192 to 212 (PVFA…EYVA), 230 to 250 (LVFM…SGVL), and 263 to 283 (AIFH…LALI).

Belongs to the ATPase A chain family. F-type ATPases have 2 components, CF(1) - the catalytic core - and CF(0) - the membrane proton channel. CF(1) has five subunits: alpha(3), beta(3), gamma(1), delta(1), epsilon(1). CF(0) has three main subunits: a(1), b(2) and c(9-12). The alpha and beta chains form an alternating ring which encloses part of the gamma chain. CF(1) is attached to CF(0) by a central stalk formed by the gamma and epsilon chains, while a peripheral stalk is formed by the delta and b chains.

It localises to the cell inner membrane. Functionally, key component of the proton channel; it plays a direct role in the translocation of protons across the membrane. The protein is ATP synthase subunit a of Paracidovorax citrulli (strain AAC00-1) (Acidovorax citrulli).